A 215-amino-acid polypeptide reads, in one-letter code: Golgi-associated RAB2 interactor protein 5A (215 aa).

Disordered regions lie at residues 1-20 and 174-215; these read MKRG…AGPG and QDYS…LWGL. The segment covering 178-191 has biased composition (acidic residues); that stretch reads ALEDDEDDDEDEDR.

The protein belongs to the GARIN family. In terms of assembly, interacts (via N-terminus) with RAB2B (in GTP-bound form).

The protein localises to the golgi apparatus. RAB2B effector protein which promotes cytosolic DNA-induced innate immune responses. Regulates IFN responses against DNA viruses by regulating the CGAS-STING signaling axis. This is Golgi-associated RAB2 interactor protein 5A (GARIN5A) from Bos taurus (Bovine).